Consider the following 166-residue polypeptide: Signal peptidase complex catalytic subunit SEC11 (166 aa).

The Cytoplasmic segment spans residues 1–9 (MNIRQQITQ). A helical; Signal-anchor for type II membrane protein membrane pass occupies residues 10-30 (FLSLAYVFSSAFMLWKTLSVI). Residues 31–166 (ANSHSPIVVV…LGLSSLFSNE (136 aa)) are Lumenal-facing. Active-site charge relay system residues include serine 44, histidine 83, and aspartate 108. The segment at 152–163 (GMLGLLGLSSLF) is C-terminal short (CTS) helix.

The protein belongs to the peptidase S26B family. Component of the signal peptidase complex (SPC) composed of a catalytic subunit SEC11 and three accessory subunits SPC1, SPC2 and SPC3. The complex induces a local thinning of the ER membrane which is used to measure the length of the signal peptide (SP) h-region of protein substrates. This ensures the selectivity of the complex towards h-regions shorter than 18-20 amino acids. SPC associates with the translocon complex.

The protein resides in the endoplasmic reticulum membrane. It carries out the reaction Cleavage of hydrophobic, N-terminal signal or leader sequences from secreted and periplasmic proteins.. Its function is as follows. Catalytic component of the signal peptidase complex (SPC) which catalyzes the cleavage of N-terminal signal sequences from nascent proteins as they are translocated into the lumen of the endoplasmic reticulum. Specifically cleaves N-terminal signal peptides that contain a hydrophobic alpha-helix (h-region) shorter than 18-20 amino acids. In Candida albicans (strain SC5314 / ATCC MYA-2876) (Yeast), this protein is Signal peptidase complex catalytic subunit SEC11 (SEC11).